We begin with the raw amino-acid sequence, 495 residues long: Cysteine-rich secretory protein LCCL domain-containing 2 (495 aa).

The N-terminal stretch at methionine 1–alanine 22 is a signal peptide. The N-linked (GlcNAc...) asparagine glycan is linked to asparagine 27. Residues leucine 60–tyrosine 200 enclose the SCP domain. LCCL domains are found at residues methionine 282–phenylalanine 377 and threonine 383–asparagine 486. 4 disulfide bridges follow: cysteine 288–cysteine 306, cysteine 310–cysteine 330, cysteine 389–cysteine 411, and cysteine 415–cysteine 438.

In terms of assembly, binds to heparin, dermatan sulfate and chondroitin sulfate. As to expression, present in kidney renal tubules (at protein level).

It localises to the secreted. Its function is as follows. Promotes matrix assembly. This is Cysteine-rich secretory protein LCCL domain-containing 2 (Crispld2) from Mus musculus (Mouse).